The chain runs to 127 residues: Glycine cleavage system H protein (127 aa).

Positions 24-105 (TVKVGISDHA…PYEAWLFAVR (82 aa)) constitute a Lipoyl-binding domain. Residue lysine 65 is modified to N6-lipoyllysine.

It belongs to the GcvH family. In terms of assembly, the glycine cleavage system is composed of four proteins: P, T, L and H. (R)-lipoate serves as cofactor.

The glycine cleavage system catalyzes the degradation of glycine. The H protein shuttles the methylamine group of glycine from the P protein to the T protein. This Methylococcus capsulatus (strain ATCC 33009 / NCIMB 11132 / Bath) protein is Glycine cleavage system H protein.